The chain runs to 416 residues: Formyl-CoA:oxalate CoA-transferase (416 aa).

Residues Gln-17–Ser-18, Arg-38, Leu-72–Lys-75, Asn-96–His-98, His-104, and Lys-137–Glu-140 contribute to the CoA site. The Nucleophile role is filled by Asp-169. A substrate-binding site is contributed by Gly-248–Gln-250. Gln-273–Gln-275 contributes to the CoA binding site.

The protein belongs to the CoA-transferase III family. Frc subfamily. In terms of assembly, homodimer.

The catalysed reaction is formyl-CoA + oxalate = oxalyl-CoA + formate. The protein operates within metabolic intermediate degradation; oxalate degradation; CO(2) and formate from oxalate: step 1/2. Functionally, involved in the catabolism of oxalate and in the adapatation to low pH via the induction of the oxalate-dependent acid tolerance response (ATR). Catalyzes the transfer of the CoA moiety from formyl-CoA to oxalate. The polypeptide is Formyl-CoA:oxalate CoA-transferase (Escherichia coli (strain ATCC 8739 / DSM 1576 / NBRC 3972 / NCIMB 8545 / WDCM 00012 / Crooks)).